The sequence spans 324 residues: HTH-type transcriptional regulator CysB (324 aa).

The 59-residue stretch at 1 to 59 folds into the HTH lysR-type domain; sequence MKLQQLRYIVEVVNHNLNVSSTAEGLYTSQPGISKQVRMLEDELGIQIFARSGKHLTQV. The segment at residues 19-38 is a DNA-binding region (H-T-H motif); the sequence is VSSTAEGLYTSQPGISKQVR.

Belongs to the LysR transcriptional regulatory family. As to quaternary structure, homotetramer.

It localises to the cytoplasm. Functionally, this protein is a positive regulator of gene expression for the cysteine regulon. The inducer for CysB is N-acetylserine. Thiosulfate and sulfide act as anti-inducers. The chain is HTH-type transcriptional regulator CysB (cysB) from Klebsiella pneumoniae.